The sequence spans 207 residues: LexA repressor (207 aa).

A DNA-binding region (H-T-H motif) is located at residues 28–48 (RAEIARELGFRSANAAEEHLK). Active-site for autocatalytic cleavage activity residues include serine 124 and lysine 161.

The protein belongs to the peptidase S24 family. In terms of assembly, homodimer.

It carries out the reaction Hydrolysis of Ala-|-Gly bond in repressor LexA.. Its function is as follows. Represses a number of genes involved in the response to DNA damage (SOS response), including recA and lexA. In the presence of single-stranded DNA, RecA interacts with LexA causing an autocatalytic cleavage which disrupts the DNA-binding part of LexA, leading to derepression of the SOS regulon and eventually DNA repair. The polypeptide is LexA repressor (Vibrio vulnificus (strain CMCP6)).